The sequence spans 716 residues: Putative cuticle collagen 99 (716 aa).

Disordered regions lie at residues 85–122 (LPSSDSNTDDDDVAKSRRVRNSCMCPAGPPGERGPVGP) and 183–472 (PPGP…SLVA). Triple-helical region regions lie at residues 179–238 (GMPG…KGDR), 265–298 (LPGPPGPPGPPGPAGRDGRHGLKGDRGLPGFDGE), and 302–330 (GPKGETGSPGRDGIPGARGPPGERGEKGD). Over residues 266–277 (PGPPGPPGPPGP) the composition is skewed to pro residues. The segment covering 280-290 (RDGRHGLKGDR) has biased composition (basic and acidic residues). The segment covering 349 to 358 (PGPPGPPGPP) has biased composition (pro residues). 2 triple-helical region regions span residues 385–411 (GPPGEKGERGERGEPGDRGLPGAAGAA) and 422–467 (GPPG…GRHG). A compositionally biased stretch (basic and acidic residues) spans 389–401 (EKGERGERGEPGD). A compositionally biased stretch (low complexity) spans 402–422 (RGLPGAAGAANLLNGGKALVG). The span at 429-444 (RDGRPGDKGEKGEQGL) shows a compositional bias: basic and acidic residues. A glycan (N-linked (GlcNAc...) asparagine) is linked at Asn-474. Positions 503 to 716 (KNVIPGPPGP…GAETRPPVTD (214 aa)) are disordered. 3 triple-helical region regions span residues 507-557 (PGPP…QPGA), 566-603 (GPRGPPGLPGPPGEKGDLGPPGLPGQPGSLGLPGPPGP), and 605-664 (GLRG…PGLD). The segment covering 568–577 (RGPPGLPGPP) has biased composition (pro residues).

This sequence belongs to the cuticular collagen family. As to quaternary structure, collagen polypeptide chains are complexed within the cuticle by disulfide bonds and other types of covalent cross-links.

In terms of biological role, nematode cuticles are composed largely of collagen-like proteins. The cuticle functions both as an exoskeleton and as a barrier to protect the worm from its environment. The sequence is that of Putative cuticle collagen 99 (col-99) from Caenorhabditis elegans.